Reading from the N-terminus, the 256-residue chain is UPF0246 protein Bpet1601 (256 aa).

Belongs to the UPF0246 family.

The chain is UPF0246 protein Bpet1601 from Bordetella petrii (strain ATCC BAA-461 / DSM 12804 / CCUG 43448).